Here is a 483-residue protein sequence, read N- to C-terminus: ATP-dependent RNA helicase DDX25 (483 aa).

A Nuclear export signal motif is present at residues 61–74; it reads LAANSLLNKLIHQS. The Q motif motif lies at 97–125; that stretch reads KTFEELRLKEELLKGIYAMGFNRPSKIQE. The Nuclear localization signal signature appears at 100–114; the sequence is EELRLKEELLKGIYA. The Helicase ATP-binding domain occupies 130–300; it reads MMLAHPPQNL…ERIIPDPNVI (171 aa). 143–150 is an ATP binding site; sequence SQSGTGKT. The DEAD box motif lies at 247-250; the sequence is DEAD. One can recognise a Helicase C-terminal domain in the interval 311–478; the sequence is NIRQYYVLCE…QLNAEDMDEI (168 aa).

This sequence belongs to the DEAD box helicase family. In terms of processing, phosphorylated on threonine residues. The phosphorylated form is found in the cytoplasm but not in the nucleus. Highly expressed in the Leydig and germ cells of the testis and weakly expressed in the pituitary and hypothalamus.

The protein localises to the cytoplasm. It is found in the nucleus. The enzyme catalyses ATP + H2O = ADP + phosphate + H(+). Its function is as follows. ATP-dependent RNA helicase. Required for mRNA export and translation regulation during spermatid development. The polypeptide is ATP-dependent RNA helicase DDX25 (DDX25) (Homo sapiens (Human)).